The chain runs to 218 residues: Probable nicotinate-nucleotide adenylyltransferase (218 aa).

This sequence belongs to the NadD family.

It carries out the reaction nicotinate beta-D-ribonucleotide + ATP + H(+) = deamido-NAD(+) + diphosphate. Its pathway is cofactor biosynthesis; NAD(+) biosynthesis; deamido-NAD(+) from nicotinate D-ribonucleotide: step 1/1. In terms of biological role, catalyzes the reversible adenylation of nicotinate mononucleotide (NaMN) to nicotinic acid adenine dinucleotide (NaAD). The polypeptide is Probable nicotinate-nucleotide adenylyltransferase (Burkholderia cenocepacia (strain ATCC BAA-245 / DSM 16553 / LMG 16656 / NCTC 13227 / J2315 / CF5610) (Burkholderia cepacia (strain J2315))).